The chain runs to 427 residues: MGSRGDHGGGGGGRGAARATQLKVLVPSSFRKMRICDELAAQLGVGVGGGGAPRAATARVASPLGKAWDVGVVRDGDGRAFLGRGWAEFAAAHGLGVGWFVVLRHGGGVLAVEAFDTTCCLRVFGAPPAEAGRATDTSRKPQFLTVLLPGIMDKMRIPDKFVRDYITGENLNSNMAIILSPLGKSWRVELDKDQSGVFLGGGWLQFLSFHGISRGDVVIFRYEGNLVFKISVFGPNGRQKDFKAKGISIYQGTGEQQEAPSFSRRKCNNKKKSRFGEDDGNQQEMPCSRKGSGNKGRTSDRETKRMRKTRSVYEIGPRSWIKKEINEYVLERCILSLARTFCESIGLVEESSITLMMIDTTSTQGDQGGSSSSSRSWEVTGRRYKDACYLLGAGWRRFCEDNGVRSGDVCVFTVLDTTLWRVDIERC.

2 DNA-binding regions (TF-B3) span residues 25 to 118 (LVPS…FDTT) and 140 to 236 (KPQF…FGPN). A disordered region spans residues 253-309 (TGEQQEAPSFSRRKCNNKKKSRFGEDDGNQQEMPCSRKGSGNKGRTSDRETKRMRKT). The span at 263–273 (SRRKCNNKKKS) shows a compositional bias: basic residues. A DNA-binding region (TF-B3 3) is located at residues 320-427 (WIKKEINEYV…TLWRVDIERC (108 aa)).

The protein resides in the nucleus. This Oryza sativa subsp. japonica (Rice) protein is Putative B3 domain-containing protein Os04g0346900.